Reading from the N-terminus, the 157-residue chain is DNA gyrase inhibitor 2 (157 aa).

It belongs to the DNA gyrase inhibitor family. In terms of assembly, interacts with DNA gyrase.

It localises to the cytoplasm. Functionally, inhibits the supercoiling activity of DNA gyrase. Acts by inhibiting DNA gyrase at an early step, prior to (or at the step of) binding of DNA by the gyrase. It protects cells against toxins that target DNA gyrase, by inhibiting activity of these toxins and reducing the formation of lethal double-strand breaks in the cell. This is DNA gyrase inhibitor 2 from Dickeya dadantii (strain 3937) (Erwinia chrysanthemi (strain 3937)).